The sequence spans 216 residues: DNA-directed RNA polymerase subunit alpha (216 aa).

Belongs to the RNA polymerase alpha chain family. In plastids the minimal PEP RNA polymerase catalytic core is composed of four subunits: alpha, beta, beta', and beta''. When a (nuclear-encoded) sigma factor is associated with the core the holoenzyme is formed, which can initiate transcription.

Its subcellular location is the plastid. It localises to the chloroplast. The enzyme catalyses RNA(n) + a ribonucleoside 5'-triphosphate = RNA(n+1) + diphosphate. Functionally, DNA-dependent RNA polymerase catalyzes the transcription of DNA into RNA using the four ribonucleoside triphosphates as substrates. This chain is DNA-directed RNA polymerase subunit alpha (rpoA), found in Euglena gracilis.